Here is a 268-residue protein sequence, read N- to C-terminus: Ribosomal RNA small subunit methyltransferase A (268 aa).

Residues Asn-18, Leu-20, Gly-45, Glu-66, Asp-91, and Asn-112 each contribute to the S-adenosyl-L-methionine site.

It belongs to the class I-like SAM-binding methyltransferase superfamily. rRNA adenine N(6)-methyltransferase family. RsmA subfamily.

The protein resides in the cytoplasm. The catalysed reaction is adenosine(1518)/adenosine(1519) in 16S rRNA + 4 S-adenosyl-L-methionine = N(6)-dimethyladenosine(1518)/N(6)-dimethyladenosine(1519) in 16S rRNA + 4 S-adenosyl-L-homocysteine + 4 H(+). Its function is as follows. Specifically dimethylates two adjacent adenosines (A1518 and A1519) in the loop of a conserved hairpin near the 3'-end of 16S rRNA in the 30S particle. May play a critical role in biogenesis of 30S subunits. This Shewanella putrefaciens (strain CN-32 / ATCC BAA-453) protein is Ribosomal RNA small subunit methyltransferase A.